Consider the following 147-residue polypeptide: MVHMSAEEKGIVTSMWGKVNVDDIGAEALGRLLVVYPWTQRFFDSFGDLSSPAAIMGNPKVKAHGKKVAHSISDGIKNLDNLKGTYAKLSELHCDKLHVDPENFRLLGNVLVCVLARNLGKEFTPHARTAFQKMVLEVAAALAHKYH.

Valine 2 is modified (N-acetylvaline). Residues 3 to 147 (HMSAEEKGIV…VAAALAHKYH (145 aa)) enclose the Globin domain. Threonine 13 carries the phosphothreonine modification. Serine 45 bears the Phosphoserine mark. Residue lysine 60 is modified to N6-acetyllysine. Histidine 64 serves as a coordination point for heme b. Lysine 83 carries the N6-acetyllysine modification. Residue histidine 93 coordinates heme b. Cysteine 94 carries the post-translational modification S-nitrosocysteine. Residue lysine 145 is modified to N6-acetyllysine.

This sequence belongs to the globin family. In terms of assembly, heterotetramer of two alpha chains and two beta chains. As to expression, red blood cells.

Functionally, involved in oxygen transport from the lung to the various peripheral tissues. In Scalopus aquaticus (Eastern mole), this protein is Hemoglobin subunit beta (HBB).